The sequence spans 219 residues: Ribose-5-phosphate isomerase A (219 aa).

Substrate contacts are provided by residues 28-31 (TGST), 81-84 (DGAD), and 94-97 (KGGG). Residue Glu103 is the Proton acceptor of the active site. Lys121 contributes to the substrate binding site.

The protein belongs to the ribose 5-phosphate isomerase family. In terms of assembly, homodimer.

The enzyme catalyses aldehydo-D-ribose 5-phosphate = D-ribulose 5-phosphate. The protein operates within carbohydrate degradation; pentose phosphate pathway; D-ribose 5-phosphate from D-ribulose 5-phosphate (non-oxidative stage): step 1/1. Its function is as follows. Catalyzes the reversible conversion of ribose-5-phosphate to ribulose 5-phosphate. The sequence is that of Ribose-5-phosphate isomerase A from Shigella boydii serotype 18 (strain CDC 3083-94 / BS512).